Here is a 41-residue protein sequence, read N- to C-terminus: Photosystem I reaction center subunit IX (41 aa).

Residues 7 to 27 (YLSTAPVLLTLWMTFTAGFII) traverse the membrane as a helical segment.

It belongs to the PsaJ family.

Its subcellular location is the plastid. It localises to the chloroplast thylakoid membrane. Functionally, may help in the organization of the PsaE and PsaF subunits. The chain is Photosystem I reaction center subunit IX from Trieres chinensis (Marine centric diatom).